Here is a 392-residue protein sequence, read N- to C-terminus: Nucleolysin TIAR (392 aa).

2 consecutive RRM domains span residues 9–102 (RTLY…WATT) and 114–192 (FHVF…WATR). At Lys139 the chain carries N6-acetyllysine. Residue Ser218 is modified to Phosphoserine. The region spanning 222–294 (CTVYCGGIAS…HVVKCYWGKE (73 aa)) is the RRM 3 domain. Positions 363–392 (GAQPPQGQAPPPVIPPPNQAGYGMASFPTQ) are disordered. Residues 369–380 (GQAPPPVIPPPN) are compositionally biased toward pro residues.

In terms of assembly, interacts with FASTK. Phosphorylated by MAPK14 following DNA damage, releasing TIAR from GADD45A mRNA. In terms of tissue distribution, expressed both in primordial germ cells (PGCs) and in neighboring somatic cells.

Its subcellular location is the nucleus. The protein resides in the cytoplasm. The protein localises to the stress granule. It is found in the cytolytic granule. RNA-binding protein involved in alternative pre-RNA splicing and in cytoplasmic stress granules formation. Shows a preference for uridine-rich RNAs. Activates splicing of alternative exons with weak 5' splice sites followed by a U-rich stretch on its own pre-mRNA and on TIA1 mRNA. Promotes the inclusion of TIA1 exon 5 to give rise to the long isoform (isoform a) of TIA1. Acts downstream of the stress-induced phosphorylation of EIF2S1/EIF2A to promote the recruitment of untranslated mRNAs to cytoplasmic stress granules (SG). Possesses nucleolytic activity against cytotoxic lymphocyte target cells. May be involved in apoptosis. The chain is Nucleolysin TIAR (Tial1) from Mus musculus (Mouse).